A 484-amino-acid polypeptide reads, in one-letter code: MKKWLMVQGTTSDAGKSVLVAGLCRVLARRGIQVCPFKPQNMALNSAVTPDGGEIGRAQAVQAQACGIAPSVHMNPVLLKPNSDTGAQVILQGRALSNMEANAYHDYKKVAMDTVMDSFQRLQQEYEAIMIEGAGSPAEINLRENDIANMGFAEKADVPVIIVADIDRGGVFAHLYGTLALLSESEQARVKGFVINRFRGDIGLLQSGLDWLEQKTGKPVIGVLPYLHGFDLEAEDAIAAQQNLSADRQLRVAVPVFTRISNHTDFDPLRLNPNIDFRYVGQGESLSGADLIILPGSKSTRADLAYLRSQGWDKEILRHLRLGGKVMGICGGFQMLGEWVHDPLGIEGEAGSSEGLGLFAMQTELTAEKRLTNVQGHLTLDGQTVAAQGYEIHAGRSSWAADQKSPIILSDGSLDGLVSDCNQGFGTYLHGIFDRPETALRICQWAGAKEIEAYDHRAAQERAIDRIADAIEQHLNLTLLWPDL.

The region spanning 249-438 (QLRVAVPVFT…LHGIFDRPET (190 aa)) is the GATase cobBQ-type domain. The Nucleophile role is filled by C330. H430 is a catalytic residue.

This sequence belongs to the CobB/CobQ family. CobQ subfamily.

The protein operates within cofactor biosynthesis; adenosylcobalamin biosynthesis. Its function is as follows. Catalyzes amidations at positions B, D, E, and G on adenosylcobyrinic A,C-diamide. NH(2) groups are provided by glutamine, and one molecule of ATP is hydrogenolyzed for each amidation. This is Cobyric acid synthase from Vibrio cholerae serotype O1 (strain ATCC 39541 / Classical Ogawa 395 / O395).